Here is a 155-residue protein sequence, read N- to C-terminus: Nuclear cap-binding protein subunit 2 (155 aa).

MRNA contacts are provided by residues Tyr-19, Tyr-42, 111–115 (RTDWD), 122–126 (RQYGR), and 132–133 (QV). The 79-residue stretch at 39–117 (ATLYVGNLSF…RIIRTDWDAG (79 aa)) folds into the RRM domain. The interval 121–155 (GRQYGRGKSGGQVRDEYRQDYDPARGGYGKMVQKS) is disordered. Over residues 133–143 (VRDEYRQDYDP) the composition is skewed to basic and acidic residues.

Belongs to the RRM NCBP2 family. Component of the nuclear cap-binding complex (CBC), a heterodimer composed of ncbp1/cbp80 and ncbp2/cbp20 that interacts with m7GpppG-capped RNA.

Its subcellular location is the nucleus. The protein localises to the cytoplasm. Its function is as follows. Component of the cap-binding complex (CBC), which binds co-transcriptionally to the 5' cap of pre-mRNAs and is involved in various processes such as pre-mRNA splicing, translation regulation, nonsense-mediated mRNA decay, RNA-mediated gene silencing (RNAi) by microRNAs (miRNAs) and mRNA export. The CBC complex is involved in mRNA export from the nucleus, leading to the recruitment of the mRNA export machinery to the 5' end of mRNA and to mRNA export in a 5' to 3' direction through the nuclear pore. The CBC complex is also involved in mediating U snRNA and intronless mRNAs export from the nucleus. The CBC complex is essential for a pioneer round of mRNA translation, before steady state translation when the CBC complex is replaced by cytoplasmic cap-binding protein eIF4E. The pioneer round of mRNA translation mediated by the CBC complex plays a central role in nonsense-mediated mRNA decay (NMD), NMD only taking place in mRNAs bound to the CBC complex, but not on eIF4E-bound mRNAs. The CBC complex enhances NMD in mRNAs containing at least one exon-junction complex (EJC), promoting the interaction between upf1 and upf2. The CBC complex is also involved in 'failsafe' NMD, which is independent of the EJC complex, while it does not participate in Staufen-mediated mRNA decay (SMD). During cell proliferation, the CBC complex is also involved in microRNAs (miRNAs) biogenesis via its interaction with srrt/ars2, thereby being required for miRNA-mediated RNA interference. The CBC complex also acts as a negative regulator of parn, thereby acting as an inhibitor of mRNA deadenylation. In the CBC complex, ncbp2/cbp20 recognizes and binds capped RNAs (m7GpppG-capped RNA) but requires ncbp1/cbp80 to stabilize the movement of its N-terminal loop and lock the CBC into a high affinity cap-binding state with the cap structure. The conventional cap-binding complex with NCBP2 binds both small nuclear RNA (snRNA) and messenger (mRNA) and is involved in their export from the nucleus. The chain is Nuclear cap-binding protein subunit 2 (ncbp2) from Danio rerio (Zebrafish).